Consider the following 168-residue polypeptide: Transcription elongation factor GreB (168 aa).

This sequence belongs to the GreA/GreB family. GreB subfamily.

Its function is as follows. Necessary for efficient RNA polymerase transcription elongation past template-encoded arresting sites. The arresting sites in DNA have the property of trapping a certain fraction of elongating RNA polymerases that pass through, resulting in locked ternary complexes. Cleavage of the nascent transcript by cleavage factors such as GreA or GreB allows the resumption of elongation from the new 3'terminus. GreB releases sequences of up to 9 nucleotides in length. This chain is Transcription elongation factor GreB, found in Xanthomonas axonopodis pv. citri (strain 306).